Consider the following 512-residue polypeptide: Extracellular serine/threonine protein kinase CeFam20 (512 aa).

The Cytoplasmic segment spans residues 1–6; sequence MRCNIK. A helical; Signal-anchor for type II membrane protein membrane pass occupies residues 7-26; sequence RLFTLAIGVFAATLVIISFS. Topologically, residues 27 to 512 are lumenal; it reads KDNYEREWKQ…QDKKDDKKTV (486 aa). The cysteines at positions 110 and 144 are disulfide-linked. N113 carries an N-linked (GlcNAc...) asparagine glycan. Residues Q176, K192, and E213 each coordinate ATP. E213 contributes to the Mn(2+) binding site. A glycan (N-linked (GlcNAc...) asparagine) is linked at N242. Disulfide bonds link C268–C284 and C273–C277. An ATP-binding site is contributed by 295 to 298; the sequence is QVFL. 2 cysteine pairs are disulfide-bonded: C333–C409 and C410–C469. D366 is a catalytic residue. ATP contacts are provided by E371 and D387. Residue D387 coordinates Mn(2+). The tract at residues 486-512 is disordered; the sequence is PDVSDAEQNDEEQSEEHQDKKDDKKTV. Residues 489 to 499 show a composition bias toward acidic residues; sequence SDAEQNDEEQS. Positions 500–512 are enriched in basic and acidic residues; the sequence is EEHQDKKDDKKTV.

It belongs to the FAM20 family. It depends on Mn(2+) as a cofactor.

It is found in the golgi apparatus membrane. The protein localises to the secreted. The catalysed reaction is L-seryl-[protein] + ATP = O-phospho-L-seryl-[protein] + ADP + H(+). It carries out the reaction L-threonyl-[protein] + ATP = O-phospho-L-threonyl-[protein] + ADP + H(+). In terms of biological role, golgi serine/threonine protein kinase that phosphorylates secretory pathway proteins within Ser-x-Glu/pSer motifs. The sequence is that of Extracellular serine/threonine protein kinase CeFam20 from Caenorhabditis elegans.